A 256-amino-acid polypeptide reads, in one-letter code: Protein YIPF5 (256 aa).

At Met1–Asp125 the chain is on the cytoplasmic side. A helical transmembrane segment spans residues Leu126–Ile146. Position 147 (Gln147) is a topological domain, lumenal. A helical membrane pass occupies residues Phe148–Leu168. At Met169–Thr172 the chain is on the cytoplasmic side. Residues Gly173–Leu193 traverse the membrane as a helical segment. The Lumenal segment spans residues Ser194 to Thr195. Residues Phe196 to Gly216 traverse the membrane as a helical segment. Residues Trp217 to Gln235 are Cytoplasmic-facing. Residues Gln236–Phe256 form a helical membrane-spanning segment.

This sequence belongs to the YIP1 family.

The protein localises to the endoplasmic reticulum membrane. The protein resides in the golgi apparatus. Its subcellular location is the cis-Golgi network membrane. Functionally, plays a role in transport between endoplasmic reticulum and Golgi. The sequence is that of Protein YIPF5 (yipf5) from Xenopus laevis (African clawed frog).